A 256-amino-acid chain; its full sequence is MQLALICENPERQNELDELAQRWGLSHDENSIFALVLTDTQLELRKLDEAKLGAVFVDLVSGAAAHRRKFGGGRGQAIAKAVGLKKGVMPRVLDGTAGLGRDAFVLASLGCTVQMVERHPVVAALLDDGLARAKQDPEIGGWITERLSLLHASSQDALVKLLEDPDFIAPDVVYLDPMYPHKKKSALVKKEMRVFQTLVGADNDADSLFAPAMALATKRVVVKRPDYAEFLANAKPSTAIETKKNRFDVYVKAAMT.

S-adenosyl-L-methionine contacts are provided by residues 101-102, 117-118, 153-154, and Asp176; these read RD, ER, and SS.

The protein belongs to the methyltransferase superfamily. RsmJ family.

The protein localises to the cytoplasm. It carries out the reaction guanosine(1516) in 16S rRNA + S-adenosyl-L-methionine = N(2)-methylguanosine(1516) in 16S rRNA + S-adenosyl-L-homocysteine + H(+). Specifically methylates the guanosine in position 1516 of 16S rRNA. The protein is Ribosomal RNA small subunit methyltransferase J of Photobacterium profundum (strain SS9).